Consider the following 184-residue polypeptide: Ribosome-recycling factor (184 aa).

This sequence belongs to the RRF family.

The protein localises to the cytoplasm. In terms of biological role, responsible for the release of ribosomes from messenger RNA at the termination of protein biosynthesis. May increase the efficiency of translation by recycling ribosomes from one round of translation to another. The sequence is that of Ribosome-recycling factor from Clostridium botulinum (strain Okra / Type B1).